We begin with the raw amino-acid sequence, 330 residues long: MTNPENTPMTTTNEGGKGLTEYEAKIYDRSIRLWGVDAQAKLRQSKVLFIGINGLMSEIIKNVVLAGVDSITLVDDHIITTSDLSAHLFINEDSVGKVISTESVFAISELNPLVTIDVYDKEIETMDDQFIKNYTMVVISDKNLNNVSKVNSLCRKNNVSFIFSHSFGLKGLFFSDLNEFKYFTKTTTEPPKTETHISIFKSFKESMGYDWSKTNSRTPLPFFALSTLYQFEEKHNRVPDNISDSDLSELKSIINSSIEKFNLKNTDSNKYFEETKDLLNKMNIEISPVCAIVGGIVGAEIIKIITQNMQVLNNFFFYDGVKGTGLVEQF.

The protein belongs to the ubiquitin-activating E1 family. As to quaternary structure, heterodimer of sae1 and sae2. The complex binds sumo via sae2.

Its subcellular location is the nucleus. The protein operates within protein modification; protein sumoylation. In terms of biological role, the dimeric enzyme acts as an E1 ligase for sumo. It mediates ATP-dependent activation of sumo and formation of a thioester with a conserved cysteine residue on sae2. The chain is SUMO-activating enzyme subunit 1 (sae1) from Dictyostelium discoideum (Social amoeba).